Consider the following 293-residue polypeptide: Probable tRNA-splicing endonuclease subunit Sen2 (293 aa).

Residues Tyr157, His165, and Lys204 contribute to the active site. Residues 267 to 287 (VVFNHWGVILGFTVLSGLLVY) form a helical membrane-spanning segment.

Belongs to the tRNA-intron endonuclease family. TRNA splicing endonuclease is a heterotetramer composed of SEN2, SEN15, SEN34/LENG5 and SEN54.

Its subcellular location is the nucleus. It is found in the membrane. The enzyme catalyses pretRNA = a 3'-half-tRNA molecule with a 5'-OH end + a 5'-half-tRNA molecule with a 2',3'-cyclic phosphate end + an intron with a 2',3'-cyclic phosphate and a 5'-hydroxyl terminus.. In terms of biological role, constitutes one of the two catalytic subunit of the tRNA-splicing endonuclease complex, a complex responsible for identification and cleavage of the splice sites in pre-tRNA. It cleaves pre-tRNA at the 5'- and 3'-splice sites to release the intron. The products are an intron and two tRNA half-molecules bearing 2',3'-cyclic phosphate and 5'-OH termini. There are no conserved sequences at the splice sites, but the intron is invariably located at the same site in the gene, placing the splice sites an invariant distance from the constant structural features of the tRNA body. Probably carries the active site for 5'-splice site cleavage. The polypeptide is Probable tRNA-splicing endonuclease subunit Sen2 (Oryza sativa subsp. japonica (Rice)).